The sequence spans 327 residues: METVVSGIRPTGNLHLGNYFGAIRSFLDMQHRYNCFFFIADWHSLTTHPHPDNIVRNVRTILAEYLACGIDPEKATIYVQSDVREVLELYLYLNMNAYLGELERTTSFKEKARKQPNNVNAGLLTYPTLMAADILIHRAVKVPVGKDQEQNMEMARKFARRFNTIYEVDFFPEPESFSPGATALKVPGLDGSGKMGKSEGNAIYLADDAKTISKKVMKAVTDAGPEVPNSVKPEPVENLFSMLRIVSSDEVYRHFDDLYNNCSIRYGDLKKQLAADIVAFTTPIRERILEIQADEAFLDRVVREGAERARESAARTLAEVRHIIGFR.

Residues 9–11 (RPT) and 17–18 (GN) each bind ATP. The 'HIGH' region signature appears at 10-18 (PTGNLHLGN). Asp133 lines the L-tryptophan pocket. Residues 145–147 (GKD), Val186, and 194–198 (KMGKS) contribute to the ATP site. The 'KMSKS' region signature appears at 194 to 198 (KMGKS).

Belongs to the class-I aminoacyl-tRNA synthetase family. In terms of assembly, homodimer.

It is found in the cytoplasm. The catalysed reaction is tRNA(Trp) + L-tryptophan + ATP = L-tryptophyl-tRNA(Trp) + AMP + diphosphate + H(+). In terms of biological role, catalyzes the attachment of tryptophan to tRNA(Trp). In Porphyromonas gingivalis (strain ATCC BAA-308 / W83), this protein is Tryptophan--tRNA ligase.